The following is a 923-amino-acid chain: Probable dipeptidyl-aminopeptidase B (923 aa).

Positions Met1–Pro16 are enriched in basic and acidic residues. A disordered region spans residues Met1–Ser21. At Met1–Ala99 the chain is on the cytoplasmic side. Residues Leu100–Phe120 traverse the membrane as a helical; Signal-anchor for type II membrane protein segment. The Vacuolar segment spans residues Arg121–His923. Asn135, Asn351, and Asn574 each carry an N-linked (GlcNAc...) asparagine glycan. Residue Ser756 is the Charge relay system of the active site. N-linked (GlcNAc...) asparagine glycosylation is present at Asn815. Catalysis depends on charge relay system residues Asp833 and His866. Asn902 carries N-linked (GlcNAc...) asparagine glycosylation.

Belongs to the peptidase S9B family.

The protein localises to the vacuole membrane. The enzyme catalyses Release of an N-terminal dipeptide, Xaa-Yaa-|-Zaa-, from a polypeptide, preferentially when Yaa is Pro, provided Zaa is neither Pro nor hydroxyproline.. Its function is as follows. Type IV dipeptidyl-peptidase which removes N-terminal dipeptides sequentially from polypeptides having unsubstituted N-termini provided that the penultimate residue is proline. The protein is Probable dipeptidyl-aminopeptidase B (DAPB) of Ajellomyces capsulatus (strain G186AR / H82 / ATCC MYA-2454 / RMSCC 2432) (Darling's disease fungus).